An 82-amino-acid chain; its full sequence is Small ribosomal subunit protein uS12 (82 aa).

Position 59 is a 3-methylthioaspartic acid (D59).

It belongs to the universal ribosomal protein uS12 family. Part of the 30S ribosomal subunit. Contacts proteins S8 and S17. May interact with IF1 in the 30S initiation complex.

With S4 and S5 plays an important role in translational accuracy. Functionally, interacts with and stabilizes bases of the 16S rRNA that are involved in tRNA selection in the A site and with the mRNA backbone. Located at the interface of the 30S and 50S subunits, it traverses the body of the 30S subunit contacting proteins on the other side and probably holding the rRNA structure together. The combined cluster of proteins S8, S12 and S17 appears to hold together the shoulder and platform of the 30S subunit. The protein is Small ribosomal subunit protein uS12 (rpsL) of Actinobacillus pleuropneumoniae (Haemophilus pleuropneumoniae).